A 203-amino-acid polypeptide reads, in one-letter code: Endo-type membrane-bound lytic murein transglycosylase A (203 aa).

A signal peptide spans 1–15 (MKLRWFAFLIVLLAG). C16 is lipidated: N-palmitoyl cysteine. The S-diacylglycerol cysteine moiety is linked to residue C16.

It belongs to the transglycosylase Slt family.

The protein localises to the cell outer membrane. It catalyses the reaction Endolytic cleavage of the (1-&gt;4)-beta-glycosidic linkage between N-acetylmuramic acid (MurNAc) and N-acetylglucosamine (GlcNAc) residues in peptidoglycan with concomitant formation of a 1,6-anhydrobond in the MurNAc residue.. Functionally, murein-degrading enzyme. May play a role in recycling of muropeptides during cell elongation and/or cell division. Preferentially cleaves at a distance of more than two disaccharide units from the ends of the glycan chain. This is Endo-type membrane-bound lytic murein transglycosylase A from Shigella dysenteriae serotype 1 (strain Sd197).